A 365-amino-acid polypeptide reads, in one-letter code: Alternative oxidase 2, mitochondrial (365 aa).

Over residues 32–46 (TPPHSTTTTSPSSPA) the composition is skewed to low complexity. The interval 32-52 (TPPHSTTTTSPSSPAFHQPNH) is disordered. Fe cation is bound by residues glutamate 166, glutamate 205, and histidine 208. The chain crosses the membrane as a helical span at residues 220–242 (WFTRSIIYVGQGVFTNVFFLLYL). 4 residues coordinate Fe cation: glutamate 256, glutamate 257, glutamate 312, and histidine 315. The interval 345–365 (QPNHGINVMRPTGWEKQDLQL) is disordered.

Belongs to the alternative oxidase family. It depends on Fe cation as a cofactor.

The protein resides in the mitochondrion inner membrane. Functionally, catalyzes cyanide-resistant oxygen consumption. May increase respiration when the cytochrome respiratory pathway is restricted, or in response to low temperatures. The protein is Alternative oxidase 2, mitochondrial (AOX2) of Candida albicans (Yeast).